The primary structure comprises 962 residues: Rho GTPase-activating protein syd-1 (962 aa).

3 disordered regions span residues 231-367, 397-419, and 437-471; these read GKKS…MRSD, PRTLRQPNDSNKSNSLPRRRIMT, and CGEESDGAISAPEYSSPPFSRLTQQQQFRLSNGSP. 4 stretches are compositionally biased toward polar residues: residues 243–261, 323–345, 401–412, and 453–471; these read NATTTSTMRAAHASTSSPR, SFNSAPGVSSSAPMYTLPRSSTA, RQPNDSNKSNSL, and PPFSRLTQQQQFRLSNGSP. The C2 domain maps to 572 to 696; sequence RAAGPGINVD…NDDRVFALNL (125 aa). Residues 729–923 enclose the Rho-GAP domain; the sequence is VPLGRLVQRE…LDMNQASSSL (195 aa). Polar residues predominate over residues 934–947; sequence VNSESGSDSPATSG. Residues 934-962 are disordered; sequence VNSESGSDSPATSGQKGGGGVSYVSESQC.

Its subcellular location is the synapse. In terms of biological role, probable GTPase activator for the Rho-type GTPases by converting them to an inactive GDP-bound state. Regulates the localization and assembly of presynaptic components during presynaptic development and is required for specifying the identity of axons during initial polarity acquisition. In these roles it is thought to act cell autonomously downstream of syg-1 and syg-2 and upstream of syd-2, possibly as a positive regulator of the latter. Required for the control of movement, egg-laying and the correct localization of elks-1. This Caenorhabditis briggsae protein is Rho GTPase-activating protein syd-1.